A 492-amino-acid chain; its full sequence is UDP-N-acetylmuramyl-tripeptide synthetase 2 (492 aa).

Residue Ser30 coordinates UDP-N-acetyl-alpha-D-muramoyl-L-alanyl-D-glutamate. An ATP-binding site is contributed by 111–117; sequence GTNGKTT. Residues 154–155, Ser181, Gln187, and Arg189 each bind UDP-N-acetyl-alpha-D-muramoyl-L-alanyl-D-glutamate; that span reads TT. Residue Lys221 is modified to N6-carboxylysine.

The protein belongs to the MurCDEF family. MurE subfamily. Post-translationally, carboxylation is probably crucial for Mg(2+) binding and, consequently, for the gamma-phosphate positioning of ATP.

It is found in the cytoplasm. Its pathway is cell wall biogenesis; peptidoglycan biosynthesis. Its function is as follows. Catalyzes the addition of an amino acid to the nucleotide precursor UDP-N-acetylmuramoyl-L-alanyl-D-glutamate (UMAG) in the biosynthesis of bacterial cell-wall peptidoglycan. The chain is UDP-N-acetylmuramyl-tripeptide synthetase 2 from Oceanobacillus iheyensis (strain DSM 14371 / CIP 107618 / JCM 11309 / KCTC 3954 / HTE831).